Here is a 66-residue protein sequence, read N- to C-terminus: Small ribosomal subunit protein bS21 (66 aa).

This sequence belongs to the bacterial ribosomal protein bS21 family.

The sequence is that of Small ribosomal subunit protein bS21 from Maridesulfovibrio salexigens (strain ATCC 14822 / DSM 2638 / NCIMB 8403 / VKM B-1763) (Desulfovibrio salexigens).